The primary structure comprises 192 residues: Large ribosomal subunit protein bL9 (192 aa).

Positions 173–192 (ALRPEDFFDPEADGVDEDEA) are disordered. The span at 179–192 (FFDPEADGVDEDEA) shows a compositional bias: acidic residues.

This sequence belongs to the bacterial ribosomal protein bL9 family.

Its function is as follows. Binds to the 23S rRNA. This is Large ribosomal subunit protein bL9 (rplI) from Rhizobium leguminosarum bv. trifolii.